The chain runs to 391 residues: Inactive polyketide synthase 2 (391 aa).

Residue Cys-164 is part of the active site.

The protein belongs to the thiolase-like superfamily. Chalcone/stilbene synthases family. As to quaternary structure, homodimer.

In Rubus idaeus (Raspberry), this protein is Inactive polyketide synthase 2 (PKS2).